We begin with the raw amino-acid sequence, 454 residues long: Retinoblastoma-binding protein homolog 5 (454 aa).

WD repeat units lie at residues 23-64, 65-104, 153-192, 196-235, 248-288, and 292-330; these read LQNA…RTFS, AHCLPVSCLSWSRDGRKLLTSSADNSIAMFDVLAGTLLHR, SSDESASCVSYDRKGKYIIAGTGKGKLLIYNAETLKCVAW, NTVQQIRQIIVPMKSRFIITNTQDRVIRTYELEDLLHQRG, VNKA…LIKI, and NKGEALLDVQWHPTRPIILSIAQGTVSMWTQAHVENWSA.

In terms of assembly, component of the SET2 complex (also known as the SET1/COMPASS complex), which contains at least set-2, swd-2.1, cfp-1, rbbp-5, wdr-5.1, dpy-30 and ash-2.

The protein resides in the nucleus. Functionally, required for di- and trimethylation at 'Lys-4' of histone H3. Regulates left/right asymmetry of ASE sensory neurons, via its role as a component of the SET2 complex. The protein is Retinoblastoma-binding protein homolog 5 (rbbp-5) of Caenorhabditis elegans.